The sequence spans 192 residues: Phosphoheptose isomerase (192 aa).

The SIS domain maps to 37–192; the sequence is IAASLRDGGK…IMLIEKELAV (156 aa). 52 to 54 serves as a coordination point for substrate; sequence NGG. Zn(2+)-binding residues include histidine 61 and glutamate 65. Substrate contacts are provided by residues glutamate 65, 93–94, 119–121, serine 124, and glutamine 172; these read ND and STS. 2 residues coordinate Zn(2+): glutamine 172 and histidine 180.

It belongs to the SIS family. GmhA subfamily. In terms of assembly, homotetramer. Zn(2+) serves as cofactor.

It is found in the cytoplasm. The enzyme catalyses 2 D-sedoheptulose 7-phosphate = D-glycero-alpha-D-manno-heptose 7-phosphate + D-glycero-beta-D-manno-heptose 7-phosphate. It participates in carbohydrate biosynthesis; D-glycero-D-manno-heptose 7-phosphate biosynthesis; D-glycero-alpha-D-manno-heptose 7-phosphate and D-glycero-beta-D-manno-heptose 7-phosphate from sedoheptulose 7-phosphate: step 1/1. Catalyzes the isomerization of sedoheptulose 7-phosphate in D-glycero-D-manno-heptose 7-phosphate. In Tolumonas auensis (strain DSM 9187 / NBRC 110442 / TA 4), this protein is Phosphoheptose isomerase.